A 400-amino-acid chain; its full sequence is Arrestin, lateral eye (400 aa).

The protein belongs to the arrestin family. Phosphorylated.

Its function is as follows. Plays an important role in the photoreceptor transduction. This is Arrestin, lateral eye from Limulus polyphemus (Atlantic horseshoe crab).